The sequence spans 1165 residues: Phenyloxazoline synthase MbtB (1165 aa).

Residues 5–78 (PARSEDIREE…AWAQLVTAGR (74 aa)) enclose the Carrier 1 domain. S39 carries the post-translational modification O-(pantetheine 4'-phosphoryl)serine. A disordered region spans residues 77–100 (GRQDTDSAAPPADSSGDPSGETEP). Residues 97–393 (ETEPFALAPM…SSLLLDVDLV (297 aa)) form a condensation/cyclization region. Residues 578–973 (SYAQLRDQAL…RVPGVRTAVA (396 aa)) are adenylation. A Carrier 2 domain is found at 1055-1131 (AASTPLEGAL…ALAAVLRAAE (77 aa)). S1090 carries the post-translational modification O-(pantetheine 4'-phosphoryl)serine.

Belongs to the ATP-dependent AMP-binding enzyme family. MbtB subfamily. Pantetheine 4'-phosphate is required as a cofactor. In terms of processing, 4'-phosphopantetheine is transferred from CoA to a specific serine in each of the two carrier protein domains, leading to their activation from apo to holo forms.

Its pathway is siderophore biosynthesis; mycobactin biosynthesis. Involved in the initial steps of the mycobactin biosynthetic pathway. Putatively couples activated salicylic acid with serine or threonine and cyclizes this precursor to the hydroxyphenyloxazoline ring system present in this class of siderophores. In Mycolicibacterium paratuberculosis (strain ATCC BAA-968 / K-10) (Mycobacterium paratuberculosis), this protein is Phenyloxazoline synthase MbtB (mbtB).